We begin with the raw amino-acid sequence, 332 residues long: CRISPR-associated endonuclease Cas1 3 (332 aa).

Mn(2+)-binding residues include Glu-159, His-224, and Glu-239.

This sequence belongs to the CRISPR-associated endonuclease Cas1 family. Homodimer, forms a heterotetramer with a Cas2 homodimer. Requires Mg(2+) as cofactor. Mn(2+) is required as a cofactor.

Functionally, CRISPR (clustered regularly interspaced short palindromic repeat), is an adaptive immune system that provides protection against mobile genetic elements (viruses, transposable elements and conjugative plasmids). CRISPR clusters contain spacers, sequences complementary to antecedent mobile elements, and target invading nucleic acids. CRISPR clusters are transcribed and processed into CRISPR RNA (crRNA). Acts as a dsDNA endonuclease. Involved in the integration of spacer DNA into the CRISPR cassette. In Thermus thermophilus (strain ATCC 27634 / DSM 579 / HB8), this protein is CRISPR-associated endonuclease Cas1 3.